Here is a 194-residue protein sequence, read N- to C-terminus: Probable proteasome subunit beta type-4 (194 aa).

This sequence belongs to the peptidase T1B family. In terms of assembly, the 26S proteasome consists of a 20S proteasome core and two 19S regulatory subunits. The 20S proteasome core is composed of 28 subunits that are arranged in four stacked rings, resulting in a barrel-shaped structure. The two end rings are each formed by seven alpha subunits, and the two central rings are each formed by seven beta subunits. The catalytic chamber with the active sites is on the inside of the barrel.

The protein resides in the cytoplasm. It is found in the nucleus. Functionally, non-catalytic component of the proteasome, a multicatalytic proteinase complex which is characterized by its ability to cleave peptides with Arg, Phe, Tyr, Leu, and Glu adjacent to the leaving group at neutral or slightly basic pH. The proteasome has an ATP-dependent proteolytic activity. The sequence is that of Probable proteasome subunit beta type-4 from Schizosaccharomyces pombe (strain 972 / ATCC 24843) (Fission yeast).